We begin with the raw amino-acid sequence, 506 residues long: Glutamate--tRNA ligase (506 aa).

Residues 12–22 (PSPTGDPHVGT) carry the 'HIGH' region motif. Residues 253-257 (KLSKR) carry the 'KMSKS' region motif. K256 serves as a coordination point for ATP.

It belongs to the class-I aminoacyl-tRNA synthetase family. Glutamate--tRNA ligase type 1 subfamily. In terms of assembly, monomer.

It localises to the cytoplasm. It catalyses the reaction tRNA(Glu) + L-glutamate + ATP = L-glutamyl-tRNA(Glu) + AMP + diphosphate. Catalyzes the attachment of glutamate to tRNA(Glu) in a two-step reaction: glutamate is first activated by ATP to form Glu-AMP and then transferred to the acceptor end of tRNA(Glu). The polypeptide is Glutamate--tRNA ligase (Chlamydia trachomatis serovar A (strain ATCC VR-571B / DSM 19440 / HAR-13)).